The sequence spans 356 residues: Glucose 1-dehydrogenase (356 aa).

The disordered stretch occupies residues 1–26 (MDAIVVSKADRTPRLVDRPRPDPTPG). Over residues 8-21 (KADRTPRLVDRPRP) the composition is skewed to basic and acidic residues. Asp-38 provides a ligand contact to Zn(2+). Thr-40 contacts substrate. Zn(2+)-binding residues include His-63 and Glu-64. The segment at 86–107 (TVRRPRGDPTPQFDRGQPDMAA) is disordered. Residues Glu-113 and Glu-149 each contribute to the substrate site. Glu-149 provides a ligand contact to Zn(2+). NADP(+) is bound by residues 180-183 (NGSL), 205-206 (RR), 270-272 (LGV), and 300-302 (SVN). Residue Asn-302 participates in substrate binding.

This sequence belongs to the zinc-containing alcohol dehydrogenase family. Glucose 1-dehydrogenase subfamily. Zn(2+) is required as a cofactor.

The enzyme catalyses D-glucose + NAD(+) = D-glucono-1,5-lactone + NADH + H(+). It catalyses the reaction D-glucose + NADP(+) = D-glucono-1,5-lactone + NADPH + H(+). In terms of biological role, catalyzes the NAD(P)(+)-dependent oxidation of D-glucose to D-gluconate via gluconolactone. Can utilize both NAD(+) and NADP(+) as electron acceptor. Is involved in the degradation of glucose through a modified Entner-Doudoroff pathway. The sequence is that of Glucose 1-dehydrogenase from Halobacterium salinarum (strain ATCC 700922 / JCM 11081 / NRC-1) (Halobacterium halobium).